Here is a 38-residue protein sequence, read N- to C-terminus: Trypsin inhibitor 2 (38 aa).

A Pyrrolidone carboxylic acid modification is found at Q1.

Post-translationally, contains disulfide bonds.

Inhibits trypsin-like proteases from the guts of the insect pests P.truncatus, P.americana, Acheta sp and Gryllus sp. The polypeptide is Trypsin inhibitor 2 (Opuntia streptacantha (Prickly pear cactus)).